We begin with the raw amino-acid sequence, 434 residues long: Histidinol dehydrogenase (434 aa).

NAD(+)-binding residues include Y130, Q188, and N211. Substrate-binding residues include S237, Q259, and H262. The Zn(2+) site is built by Q259 and H262. Active-site proton acceptor residues include E326 and H327. Positions 327, 360, 414, and 419 each coordinate substrate. D360 serves as a coordination point for Zn(2+). H419 is a binding site for Zn(2+).

It belongs to the histidinol dehydrogenase family. As to quaternary structure, homodimer. Zn(2+) serves as cofactor.

The enzyme catalyses L-histidinol + 2 NAD(+) + H2O = L-histidine + 2 NADH + 3 H(+). It participates in amino-acid biosynthesis; L-histidine biosynthesis; L-histidine from 5-phospho-alpha-D-ribose 1-diphosphate: step 9/9. Functionally, catalyzes the sequential NAD-dependent oxidations of L-histidinol to L-histidinaldehyde and then to L-histidine. The sequence is that of Histidinol dehydrogenase from Salmonella choleraesuis (strain SC-B67).